The primary structure comprises 266 residues: MRRYAILGATGNTGQALLNVLLQSPDNQIHAYCRSASKLNRLRPEISQHRQVKVWEGSLEDVSLLSECIRGTRAVFMVVAIPDNMPHCTIAQDCTNAVLNTLKKLQAEGCQSLPKLIVLSSASLEDSLCADVPPLIHRVLNIAAGNLYSDLAKAEKILRAEKHWVSTTFVKPGGLVHDVQRGHTLSTKTAKTPVSFLDVAAGMVEIADMDDKTYDMMNVSVNAIGDGTAFPWKGVYYVLTGLLFHFFPWTYKYFGDSPMPKPRKDL.

It belongs to the avfA family.

It functions in the pathway mycotoxin biosynthesis; aflatoxin biosynthesis. Oxidoreductase; part of the gene cluster that mediates the biosynthesis of aflatoxins, a group of polyketide-derived furanocoumarins, and part of the most toxic and carcinogenic compounds among the known mycotoxins. The four major aflatoxins produced by A.parasiticus are aflatoxin B1 (AFB1), aflatoxin B2 (AFB2), aflatoxin G1 (AFG1) and aflatoxin G2 (AFG2). Within the aflatoxin pathway, the oxidoreductase aflX seems to be involved in the conversion of versicolorin A (VERA) to demethylsterigmatocystin (DMST), through probable epoxide ring-opening step following versicolorin A oxidation required for the formation of the xanthone ring. The biosynthesis of aflatoxins begins with the norsolorinic acid synthase aflC that combines a hexanoyl starter unit produced by the fatty acid synthase aflA/aflB and 7 malonyl-CoA extender units to synthesize the precursor NOR. The second step is the conversion of NOR to averantin and requires the norsolorinic acid ketoreductase aflD, which catalyzes the dehydration of norsolorinic acid to form (1'S)-averantin. The norsolorinic acid reductases aflE and aflF may also play a role in the conversion of NOR to AVN. The cytochrome P450 monooxygenase aflG then catalyzes the hydroxylation of AVN to 5'hydroxyaverantin (HAVN). The next step is performed by the 5'-hydroxyaverantin dehydrogenase aflH that transforms HAVN to 5'-oxoaverantin (OAVN) which is further converted to averufin (AVF) by aflK that plays a dual role in the pathway, as a 5'-oxoaverantin cyclase that mediates conversion of 5'-oxoaverantin, as well as a versicolorin B synthase in a later step in the pathway. The averufin oxidase aflI catalyzes the conversion of AVF to versiconal hemiacetal acetate (VHA). VHA is then the substrate for the versiconal hemiacetal acetate esterase aflJ to yield versiconal (VAL). Versicolorin B synthase aflK then converts VAL to versicolorin B (VERB) by closing the bisfuran ring of aflatoxin which is required for DNA-binding, thus giving to aflatoxin its activity as a mutagen. Then, the activity of the versicolorin B desaturase aflL leads to versicolorin A (VERA). A branch point starts from VERB since it can also be converted to dihydrodemethylsterigmatocystin (DMDHST), probably also by aflL, VERA being a precursor for aflatoxins B1 and G1, and DMDHST for aflatoxins B2 and G2. Next, the versicolorin reductase aflM and the cytochrome P450 monooxygenase aflN are involved in conversion of VERA to demethylsterigmatocystin (DMST). AflX and aflY seem also involved in this step, through probable aflX-mediated epoxide ring-opening step following versicolorin A oxidation and aflY-mediated Baeyer-Villiger oxidation required for the formation of the xanthone ring. The methyltransferase aflO then leads to the modification of DMST to sterigmatocystin (ST), and of DMDHST to dihydrosterigmatocystin (DHST). Both ST and DHST are then substrates of the O-methyltransferase aflP to yield O-methylsterigmatocystin (OMST) and dihydro-O-methylsterigmatocystin (DHOMST), respectively. Finally OMST is converted to aflatoxins B1 and G1, and DHOMST to aflatoxins B2 and G2, via the action of several enzymes including O-methylsterigmatocystin oxidoreductase aflQ, the cytochrome P450 monooxygenase aflU, but also the NADH-dependent flavin oxidoreductase nadA which is specifically required for the synthesis of AFG1. The sequence is that of Oxidoreductase aflX from Aspergillus parasiticus (strain ATCC 56775 / NRRL 5862 / SRRC 143 / SU-1).